Here is a 164-residue protein sequence, read N- to C-terminus: Galectin-3 (164 aa).

One can recognise a Galectin domain in the interval 9–154; it reads STVDLSEPLK…FSDVLGVTVL (146 aa). A carbohydrate is bound by residues Asn-45, Arg-64, Asn-73, Arg-81, Glu-84, and Asn-138.

Homotetramer. Oligomerization is required for carbohydrate binding.

The protein localises to the secreted. The protein resides in the extracellular space. Its subcellular location is the extracellular matrix. It is found in the cell wall. Its function is as follows. Binds complex carbohydrates, such as chitooligosaccharides. Does not bind lactose. May play a role in fruiting body formation. The polypeptide is Galectin-3 (Cgl3) (Coprinopsis cinerea (Inky cap fungus)).